We begin with the raw amino-acid sequence, 437 residues long: UDP-N-acetylmuramate--L-alanine ligase (437 aa).

ATP is bound at residue 108–114 (GAHGKTS).

The protein belongs to the MurCDEF family.

It is found in the cytoplasm. It catalyses the reaction UDP-N-acetyl-alpha-D-muramate + L-alanine + ATP = UDP-N-acetyl-alpha-D-muramoyl-L-alanine + ADP + phosphate + H(+). It participates in cell wall biogenesis; peptidoglycan biosynthesis. In terms of biological role, cell wall formation. This is UDP-N-acetylmuramate--L-alanine ligase from Staphylococcus aureus (strain COL).